The primary structure comprises 86 residues: NQPGPPGPPGPPGSAGEPGPGGRPGFPGTPGMQGPQGERGLPGEXGERGLPGPPGPQGESRTGPPGSTGSRGPPGPPGRPGDSGIR.

A compositionally biased stretch (pro residues) spans 1 to 12 (NQPGPPGPPGPP). The segment at 1-86 (NQPGPPGPPG…PGRPGDSGIR (86 aa)) is disordered. Hydroxyproline is present on residues P6, P9, P12, P18, P24, P27, P30, P42, P51, P54, P65, P74, P77, and P80. The span at 16–25 (GEPGPGGRPG) shows a compositional bias: gly residues. Positions 35–50 (PQGERGLPGEXGERGL) are enriched in low complexity. The segment covering 57-71 (QGESRTGPPGSTGSR) has biased composition (low complexity).

The protein belongs to the fibril-associated collagens with interrupted helices (FACIT) family. Trimer of identical chains each containing 190 kDa of non-triple-helical sequences. The triple-helical tail is stabilized by disulfide bonds at each end. In terms of processing, prolines at the third position of the tripeptide repeating unit (G-X-Y) are hydroxylated in some or all of the chains.

It localises to the secreted. Its subcellular location is the extracellular space. The protein localises to the extracellular matrix. In terms of biological role, type XII collagen interacts with type I collagen-containing fibrils, the COL1 domain could be associated with the surface of the fibrils, and the COL2 and NC3 domains may be localized in the perifibrillar matrix. This chain is Collagen alpha-1(XII) chain (COL12A1), found in Bos taurus (Bovine).